The sequence spans 644 residues: uncharacterized protein (644 aa).

The helical transmembrane segment at 16–38 (LLSYLGVVGVGIAGLCIYRSVWG) threads the bilayer. The segment covering 586 to 603 (VRQLQKEAGEGEAEEHPR) has biased composition (basic and acidic residues). Residues 586-613 (VRQLQKEAGEGEAEEHPRARPAAGKAQR) are disordered.

It localises to the membrane. This is an uncharacterized protein from Treponema pallidum (strain Nichols).